We begin with the raw amino-acid sequence, 444 residues long: ATP-dependent RNA helicase sub2 (444 aa).

The Q motif signature appears at 59 to 87; that stretch reads TGFREFLLKPELLRAISWCGFEHPSEVQQ. Residues 90–265 enclose the Helicase ATP-binding domain; the sequence is IPQAILGTDV…KKFMQNPLEI (176 aa). 103–110 is an ATP binding site; it reads AKSGLGKT. A DECD box motif is present at residues 212–215; sequence DECD. The 162-residue stretch at 277–438 folds into the Helicase C-terminal domain; the sequence is GLQQYYIKLE…EYPEGGVDSA (162 aa).

It belongs to the DEAD box helicase family. DECD subfamily.

The protein resides in the nucleus. It carries out the reaction ATP + H2O = ADP + phosphate + H(+). Functionally, ATP-binding RNA helicase involved in transcription elongation and required for the export of mRNA out of the nucleus. SUB2 also plays a role in pre-mRNA splicing and spliceosome assembly. May be involved in rDNA and telomeric silencing, and maintenance of genome integrity. This is ATP-dependent RNA helicase sub2 (sub2) from Sclerotinia sclerotiorum (strain ATCC 18683 / 1980 / Ss-1) (White mold).